Reading from the N-terminus, the 810-residue chain is Capsid protein VP1 (810 aa).

Disordered regions lie at residues 316 to 366 (QTLS…GATT) and 373 to 392 (AMSLPGTGSGTSSGGGNTSG). Positions 348-366 (PHNSQGTDPQNPSSSGATT) are enriched in polar residues. Positions 379–390 (TGSGTSSGGGNT) are enriched in gly residues.

The protein resides in the virion. Functionally, capsid protein self-assembles to form an icosahedral capsid with a T=1 symmetry, about 22 nm in diameter, and consisting of 60 copies of size variants of the capsid protein which differ in the N-terminus. The capsid encapsulates the genomic ssDNA. Capsid proteins are responsible for the attachment to host cell receptors. This attachment induces virion internalization predominantly through clathrin-dependent endocytosis. In Junonia coenia densovirus (isolate pBRJ/1990) (JcDNV), this protein is Capsid protein VP1 (VP).